The sequence spans 271 residues: Probable redox regulatory protein SCO3349 (271 aa).

2 disordered regions span residues 1–21 and 109–130; these read MPKTKKAKDEKSAKKDKKHIA and AEGTRNGWTSEDDEGSRQTRPF. Positions 7 to 21 are enriched in basic and acidic residues; that stretch reads AKDEKSAKKDKKHIA.

It belongs to the Rv0495c family.

Essential for maintaining intracellular redox homeostasis. This Streptomyces coelicolor (strain ATCC BAA-471 / A3(2) / M145) protein is Probable redox regulatory protein SCO3349.